We begin with the raw amino-acid sequence, 190 residues long: Probable nicotinate-nucleotide adenylyltransferase (190 aa).

It belongs to the NadD family.

The catalysed reaction is nicotinate beta-D-ribonucleotide + ATP + H(+) = deamido-NAD(+) + diphosphate. The protein operates within cofactor biosynthesis; NAD(+) biosynthesis; deamido-NAD(+) from nicotinate D-ribonucleotide: step 1/1. Functionally, catalyzes the reversible adenylation of nicotinate mononucleotide (NaMN) to nicotinic acid adenine dinucleotide (NaAD). The chain is Probable nicotinate-nucleotide adenylyltransferase from Myxococcus xanthus (strain DK1622).